Reading from the N-terminus, the 109-residue chain is Putative double-stranded DNA mimic protein plu2488 (109 aa).

Belongs to the putative dsDNA mimic protein family.

In terms of biological role, may act as a double-stranded DNA (dsDNA) mimic. Probably regulates the activity of a dsDNA-binding protein. This is Putative double-stranded DNA mimic protein plu2488 from Photorhabdus laumondii subsp. laumondii (strain DSM 15139 / CIP 105565 / TT01) (Photorhabdus luminescens subsp. laumondii).